Reading from the N-terminus, the 308-residue chain is MAETRITADTAMNGQIEETTAWKDFLALIKVGIVYSNLITTFTGMWLAFYFSNLSFLGNLDIVLFTLAGSSLIIAGSCVINNFYDRDIDQLMQRTRTRPTVTGKIQPSQALWFGILLTALGFIMLLMTNLTAAGVGFVGVFTYVFLYTMWSKRRYTVNTIIGSVSGAVPPLIGWTAVQGSIGVEAWVLFLIMFIWQIPHFLALAIKKTEEYRAANIPMLPVVHGFEVTKRQIIIWIACLMPLPFFLGGLGLPIVILGTVLNIGWLVCGLVGYRSKNIMKWATLMFVYSLNYLTIFFVAMVVFTLFKIG.

Helical transmembrane passes span 31–51 (VGIV…AFYF), 60–80 (LDIV…SCVI), 110–130 (ALWF…MTNL), 131–151 (TAAG…TMWS), 157–177 (VNTI…WTAV), 185–205 (AWVL…ALAI), 232–252 (IIIW…LGLP), 253–273 (IVIL…VGYR), and 285–305 (FVYS…FTLF).

The protein belongs to the UbiA prenyltransferase family. Protoheme IX farnesyltransferase subfamily. In terms of assembly, interacts with CtaA.

Its subcellular location is the cell membrane. The enzyme catalyses heme b + (2E,6E)-farnesyl diphosphate + H2O = Fe(II)-heme o + diphosphate. It functions in the pathway porphyrin-containing compound metabolism; heme O biosynthesis; heme O from protoheme: step 1/1. Its function is as follows. Converts heme B (protoheme IX) to heme O by substitution of the vinyl group on carbon 2 of heme B porphyrin ring with a hydroxyethyl farnesyl side group. The chain is Protoheme IX farnesyltransferase from Bacillus licheniformis (strain ATCC 14580 / DSM 13 / JCM 2505 / CCUG 7422 / NBRC 12200 / NCIMB 9375 / NCTC 10341 / NRRL NRS-1264 / Gibson 46).